The primary structure comprises 314 residues: (+)-neomenthol dehydrogenase (314 aa).

V13–V36 is an NADP(+) binding site. Substrate is bound at residue S183. Y239 functions as the Proton acceptor in the catalytic mechanism.

It belongs to the short-chain dehydrogenases/reductases (SDR) family. In terms of assembly, monomer. Expressed in flowers and red fruit tissues. Not detected in leaves, stems, roots or green fruits.

The catalysed reaction is (+)-neomenthol + NADP(+) = (1R,4S)-menthone + NADPH + H(+). Functionally, involved in basal resistance against pathogens. The chain is (+)-neomenthol dehydrogenase (MNR1) from Capsicum annuum (Capsicum pepper).